The following is a 102-amino-acid chain: Small ribosomal subunit protein uS10 (102 aa).

A disordered region spans residues 35–58 (SGPIPLPTKTLEIPSRKSPDGEGT).

The protein belongs to the universal ribosomal protein uS10 family. In terms of assembly, part of the 30S ribosomal subunit.

Involved in the binding of tRNA to the ribosomes. The polypeptide is Small ribosomal subunit protein uS10 (Halorubrum lacusprofundi (strain ATCC 49239 / DSM 5036 / JCM 8891 / ACAM 34)).